The chain runs to 795 residues: Cyclin-dependent kinase 11B (795 aa).

Residues 17 to 60 (LQEKKRRKEQEEKAEIKRLKNSDDRDSKRDSLEEGELRDHRMEI) show a composition bias toward basic and acidic residues. Residues 17–412 (LQEKKRRKEQ…EGDYVPDSPA (396 aa)) are disordered. 2 positions are modified to phosphoserine: serine 47 and serine 72. The segment covering 95–113 (EKAHHRKDEKRKEKRRHRS) has biased composition (basic residues). 4 stretches are compositionally biased toward basic and acidic residues: residues 114–131 (HSAE…EREH), 138–227 (REEQ…DKVK), 238–253 (PPRE…KPGE), and 264–276 (QLKE…RDLL). Serine 115 is modified (phosphoserine). Serine 283 is subject to Phosphoserine. Over residues 291–302 (SAESSSAESGSG) the composition is skewed to low complexity. Acidic residues-rich tracts occupy residues 303–364 (SEEE…EERE) and 383–392 (ESEEAEEEVG). One can recognise a Protein kinase domain in the interval 438 to 723 (FQCLNRIEEG…AEDGLKHEYF (286 aa)). ATP is bound by residues 444 to 452 (IEEGTYGVV) and lysine 467. Serine 482 carries the post-translational modification Phosphoserine; by CDK7. Residue threonine 488 is modified to Phosphothreonine; by CDK7. The active-site Proton acceptor is the aspartate 562. Serine 589 carries the phosphoserine modification. Position 594 is a phosphotyrosine (tyrosine 594). Position 595 is a phosphothreonine (threonine 595). Residue lysine 641 forms a Glycyl lysine isopeptide (Lys-Gly) (interchain with G-Cter in SUMO2) linkage. The tract at residues 733–795 (SMFPTWPAKS…AAGPGFSLKF (63 aa)) is disordered. Threonine 751 bears the Phosphothreonine mark. Position 752 is a phosphoserine (serine 752).

It belongs to the protein kinase superfamily. CMGC Ser/Thr protein kinase family. CDC2/CDKX subfamily. As to quaternary structure, cleaved isoform SV9 (p110C) binds to the serine/threonine kinase PAK1 and RANBP9. p110C interacts with RNPS1. Isoform 7, but not isoform SV9, nor its cleavage product p110C, interacts with CCND3. Interacts with CCNL1 and CCNL2. Forms complexes with pre-mRNA-splicing factors, including at least SRSF1, SRSF2 and SRSF7/SLU7. Interacts with isoform 5 of MYO18A. (Microbial infection) Interacts with human herpes virus 1 (HHV-1) transcriptional regulator ICP22. It depends on Mg(2+) as a cofactor. Post-translationally, during FAS- or TNF-induced apoptosis, isoform SV9 is cleaved by caspases to produce p110C, a fragment that contains the C-terminal kinase domain. In terms of processing, phosphorylation at Ser-115 creates a binding site for 14-3-3 proteins. p110C can be autophosphorylated. In terms of tissue distribution, expressed ubiquitously. Some evidence of isoform-specific tissue distribution.

Its subcellular location is the cytoplasm. It localises to the nucleus. The catalysed reaction is L-seryl-[protein] + ATP = O-phospho-L-seryl-[protein] + ADP + H(+). It carries out the reaction L-threonyl-[protein] + ATP = O-phospho-L-threonyl-[protein] + ADP + H(+). Phosphorylation at Thr-448 or Tyr-449 inactivates the enzyme, while phosphorylation at Thr-595 activates it. Functionally, plays multiple roles in cell cycle progression, cytokinesis and apoptosis. Involved in pre-mRNA splicing in a kinase activity-dependent manner. Isoform 7 may act as a negative regulator of normal cell cycle progression. This Homo sapiens (Human) protein is Cyclin-dependent kinase 11B (CDK11B).